Consider the following 557-residue polypeptide: CTP synthase (557 aa).

The segment at 1-272 (MARSKIVKHI…DSLVLKKLML (272 aa)) is amidoligase domain. Serine 18 provides a ligand contact to CTP. Serine 18 lines the UTP pocket. 19–24 (SLGKGI) serves as a coordination point for ATP. Residue tyrosine 59 participates in L-glutamine binding. Aspartate 76 serves as a coordination point for ATP. 2 residues coordinate Mg(2+): aspartate 76 and glutamate 146. CTP-binding positions include 153–155 (DIE), 193–198 (KTKPTQ), and lysine 229. Residues 193–198 (KTKPTQ) and lysine 229 contribute to the UTP site. One can recognise a Glutamine amidotransferase type-1 domain in the interval 299-543 (EIGVCGKYTK…VAEAKKFRDE (245 aa)). Glycine 363 lines the L-glutamine pocket. The Nucleophile; for glutamine hydrolysis role is filled by cysteine 390. L-glutamine contacts are provided by residues 391 to 394 (LGMQ), glutamate 414, and arginine 471. Residues histidine 516 and glutamate 518 contribute to the active site.

Belongs to the CTP synthase family. Homotetramer.

The catalysed reaction is UTP + L-glutamine + ATP + H2O = CTP + L-glutamate + ADP + phosphate + 2 H(+). It catalyses the reaction L-glutamine + H2O = L-glutamate + NH4(+). The enzyme catalyses UTP + NH4(+) + ATP = CTP + ADP + phosphate + 2 H(+). It functions in the pathway pyrimidine metabolism; CTP biosynthesis via de novo pathway; CTP from UDP: step 2/2. Allosterically activated by GTP, when glutamine is the substrate; GTP has no effect on the reaction when ammonia is the substrate. The allosteric effector GTP functions by stabilizing the protein conformation that binds the tetrahedral intermediate(s) formed during glutamine hydrolysis. Inhibited by the product CTP, via allosteric rather than competitive inhibition. In terms of biological role, catalyzes the ATP-dependent amination of UTP to CTP with either L-glutamine or ammonia as the source of nitrogen. Regulates intracellular CTP levels through interactions with the four ribonucleotide triphosphates. The protein is CTP synthase of Chloroherpeton thalassium (strain ATCC 35110 / GB-78).